The primary structure comprises 62 residues: Photosystem II reaction center protein Z (62 aa).

A run of 2 helical transmembrane segments spans residues 8 to 28 (SVFA…VVLA) and 41 to 61 (FSGA…NSFI).

Belongs to the PsbZ family. As to quaternary structure, PSII is composed of 1 copy each of membrane proteins PsbA, PsbB, PsbC, PsbD, PsbE, PsbF, PsbH, PsbI, PsbJ, PsbK, PsbL, PsbM, PsbT, PsbY, PsbZ, Psb30/Ycf12, at least 3 peripheral proteins of the oxygen-evolving complex and a large number of cofactors. It forms dimeric complexes.

The protein resides in the plastid. It localises to the chloroplast thylakoid membrane. In terms of biological role, may control the interaction of photosystem II (PSII) cores with the light-harvesting antenna, regulates electron flow through the 2 photosystem reaction centers. PSII is a light-driven water plastoquinone oxidoreductase, using light energy to abstract electrons from H(2)O, generating a proton gradient subsequently used for ATP formation. This chain is Photosystem II reaction center protein Z, found in Staurastrum punctulatum (Green alga).